The sequence spans 103 residues: uncharacterized protein (103 aa).

This is an uncharacterized protein from Escherichia coli (strain K12).